We begin with the raw amino-acid sequence, 177 residues long: MSTTQSERLRELLEPLVASQGLDLEEIAVDSVGRRRVLSVVVDSDTGADLDRIADVSRALSAKLDETDAMGEGEYTLEVGTPGAERSLTQHRHYVRATDRLVRFQLREGGELVARILAVDEDGLDLEVPGVKGRRPTTRRLPFGDIDKARVQVEFNRKDTKNDNQTEHDNKTEEEEA.

The segment covering 153 to 171 (VEFNRKDTKNDNQTEHDNK) has biased composition (basic and acidic residues). The disordered stretch occupies residues 153–177 (VEFNRKDTKNDNQTEHDNKTEEEEA).

This sequence belongs to the RimP family.

The protein resides in the cytoplasm. Required for maturation of 30S ribosomal subunits. The protein is Ribosome maturation factor RimP of Streptomyces coelicolor (strain ATCC BAA-471 / A3(2) / M145).